We begin with the raw amino-acid sequence, 823 residues long: Endoplasmin homolog (823 aa).

The N-terminal stretch at Met-1 to Gly-23 is a signal peptide. The segment at Asn-29 to Val-60 is disordered. The segment covering Asp-39 to Gly-48 has biased composition (basic and acidic residues). Residues Glu-106, Asn-110, Asp-154, Met-159, Asn-167, Lys-173, Ser-174–Gly-175, Gln-194–Phe-199, Phe-199, and Thr-246 contribute to the ATP site. N-linked (GlcNAc...) asparagine glycosylation occurs at Asn-110. The interval Glu-289–Thr-328 is disordered. Positions Thr-290–Asp-321 are enriched in acidic residues. 2 N-linked (GlcNAc...) asparagine glycosylation sites follow: Asn-452 and Asn-620. Residues Val-777 to Glu-792 are compositionally biased toward acidic residues. The segment at Val-777–Leu-823 is disordered. Residues Lys-820 to Leu-823 carry the Prevents secretion from ER motif.

It belongs to the heat shock protein 90 family. Interacts with FKBP42. Interacts with P23-1. In terms of tissue distribution, ubiquitous.

It localises to the endoplasmic reticulum lumen. In terms of biological role, may have a molecular chaperone role in the processing of secreted materials. Required for shoot apical meristem (SAM), root apical meristem (RAM) and floral meristem (FM) formation, probably by regulating the folding of CLAVATA proteins (CLVs). Also involved in pollen tube elongation. Involved in resistance to tunicamycin- or high calcium-induced ER stresses. Possesses ATPase activity. The chain is Endoplasmin homolog from Arabidopsis thaliana (Mouse-ear cress).